The primary structure comprises 77 residues: Acyl carrier protein (77 aa).

The region spanning 2–77 is the Carrier domain; it reads SDVAKRVKEI…DAIDYITEHT (76 aa). Ser-37 carries the post-translational modification O-(pantetheine 4'-phosphoryl)serine.

This sequence belongs to the acyl carrier protein (ACP) family. Post-translationally, 4'-phosphopantetheine is transferred from CoA to a specific serine of apo-ACP by AcpS. This modification is essential for activity because fatty acids are bound in thioester linkage to the sulfhydryl of the prosthetic group.

It localises to the cytoplasm. It participates in lipid metabolism; fatty acid biosynthesis. Its function is as follows. Carrier of the growing fatty acid chain in fatty acid biosynthesis. The chain is Acyl carrier protein from Trichlorobacter lovleyi (strain ATCC BAA-1151 / DSM 17278 / SZ) (Geobacter lovleyi).